We begin with the raw amino-acid sequence, 146 residues long: Hemoglobin subunit beta (146 aa).

The region spanning Q2 to H146 is the Globin domain. Positions 63 and 92 each coordinate heme b.

It belongs to the globin family. As to quaternary structure, heterotetramer of two alpha chains and two beta chains. As to expression, red blood cells.

In terms of biological role, involved in oxygen transport from the lung to the various peripheral tissues. This is Hemoglobin subunit beta (HBB) from Turdus merula (Common blackbird).